The primary structure comprises 122 residues: MVQQESRLRVADNTGAKEVLTIRVLGGTKRRYASVGDKIVVSIKDTAPNGSVKKGSVSTAVVVRTKKEVRRADGSYIRFDDNACVLLNAAGEMRGTRVFGPVARELREKQFMKIVSLAPEVL.

It belongs to the universal ribosomal protein uL14 family. As to quaternary structure, part of the 50S ribosomal subunit. Forms a cluster with proteins L3 and L19. In the 70S ribosome, L14 and L19 interact and together make contacts with the 16S rRNA in bridges B5 and B8.

Functionally, binds to 23S rRNA. Forms part of two intersubunit bridges in the 70S ribosome. The protein is Large ribosomal subunit protein uL14 of Flavobacterium psychrophilum (strain ATCC 49511 / DSM 21280 / CIP 103535 / JIP02/86).